A 252-amino-acid chain; its full sequence is Trans-aconitate 2-methyltransferase (252 aa).

The protein belongs to the methyltransferase superfamily. Tam family. Monomer.

Its subcellular location is the cytoplasm. The enzyme catalyses trans-aconitate + S-adenosyl-L-methionine = (E)-3-(methoxycarbonyl)pent-2-enedioate + S-adenosyl-L-homocysteine. Its function is as follows. Catalyzes the S-adenosylmethionine monomethyl esterification of trans-aconitate at high affinity and of cis-aconitate, isocitrate, and citrate at lower velocities and affinities. In Escherichia coli O157:H7, this protein is Trans-aconitate 2-methyltransferase (tam).